The primary structure comprises 65 residues: Large ribosomal subunit protein uL29 (65 aa).

Belongs to the universal ribosomal protein uL29 family.

The chain is Large ribosomal subunit protein uL29 from Buchnera aphidicola subsp. Schizaphis graminum (strain Sg).